We begin with the raw amino-acid sequence, 334 residues long: Heat-inducible transcription repressor HrcA (334 aa).

This sequence belongs to the HrcA family.

Negative regulator of class I heat shock genes (grpE-dnaK-dnaJ and groELS operons). Prevents heat-shock induction of these operons. The sequence is that of Heat-inducible transcription repressor HrcA from Albidiferax ferrireducens (strain ATCC BAA-621 / DSM 15236 / T118) (Rhodoferax ferrireducens).